A 143-amino-acid polypeptide reads, in one-letter code: Transcriptional regulator MraZ (143 aa).

2 consecutive SpoVT-AbrB domains span residues 5–47 (TYTP…PRAA) and 76–119 (TDEQ…DAQA).

Belongs to the MraZ family. As to quaternary structure, forms oligomers.

Its subcellular location is the cytoplasm. It is found in the nucleoid. This Mycobacterium bovis (strain ATCC BAA-935 / AF2122/97) protein is Transcriptional regulator MraZ.